The chain runs to 603 residues: Flavin-dependent halogenase chlA (603 aa).

The FAD site is built by Gly-16, Ala-19, and Glu-59. Chloride-binding residues include Thr-352 and Gly-353.

It belongs to the flavin-dependent halogenase family.

The enzyme catalyses 2,4,6-trihydroxyphenylhexan-1-one + FADH2 + chloride + O2 = (3-chloro-2,4,6-trihydroxyphenyl)hexan-1-one + FAD + 2 H2O + H(+). The catalysed reaction is (3-chloro-2,4,6-trihydroxyphenyl)hexan-1-one + FADH2 + chloride + O2 = (3,5-dichloro-2,4,6-trihydroxyphenyl)hexan-1-one + FAD + 2 H2O. Functionally, flavin-dependent halogenase; part of the gene cluster that mediates the biosynthesis of DIF-1 (Differentiation Inducing Factor-1), a signal molecule involved in the differentiation of pstO (prestalk-O) cells. The three-step process begins with the formation of (2,4,6-trihydroxyphenyl)-1-hexan-1-one (THPH) by the polyketide synthase StlB. THPH is then dichlorinated by the flavin-dependent halogenase ChlA. The last step of DIF-1 biosynthesis is the O-methylation of dichloro-THPH (or des-methyl-DIF-1) by the methyltransferase DmtA to yield DIF-1. The chain is Flavin-dependent halogenase chlA from Dictyostelium discoideum (Social amoeba).